Consider the following 365-residue polypeptide: tRNA/tmRNA (uracil-C(5))-methyltransferase (365 aa).

The S-adenosyl-L-methionine site is built by glutamine 189, tyrosine 217, asparagine 222, glutamate 238, and aspartate 298. The active-site Nucleophile is the cysteine 323. Glutamate 357 serves as the catalytic Proton acceptor.

It belongs to the class I-like SAM-binding methyltransferase superfamily. RNA M5U methyltransferase family. TrmA subfamily.

It carries out the reaction uridine(54) in tRNA + S-adenosyl-L-methionine = 5-methyluridine(54) in tRNA + S-adenosyl-L-homocysteine + H(+). The enzyme catalyses uridine(341) in tmRNA + S-adenosyl-L-methionine = 5-methyluridine(341) in tmRNA + S-adenosyl-L-homocysteine + H(+). Functionally, dual-specificity methyltransferase that catalyzes the formation of 5-methyluridine at position 54 (m5U54) in all tRNAs, and that of position 341 (m5U341) in tmRNA (transfer-mRNA). The protein is tRNA/tmRNA (uracil-C(5))-methyltransferase of Shewanella pealeana (strain ATCC 700345 / ANG-SQ1).